Here is a 32-residue protein sequence, read N- to C-terminus: MASEIFGTAALFWVLIPLGLAGGALLLKLQGD.

Residues 9 to 27 (AALFWVLIPLGLAGGALLL) form a helical membrane-spanning segment.

It belongs to the PetM family. The 4 large subunits of the cytochrome b6-f complex are cytochrome b6, subunit IV (17 kDa polypeptide, PetD), cytochrome f and the Rieske protein, while the 4 small subunits are PetG, PetL, PetM and PetN. The complex functions as a dimer.

The protein resides in the cellular thylakoid membrane. In terms of biological role, component of the cytochrome b6-f complex, which mediates electron transfer between photosystem II (PSII) and photosystem I (PSI), cyclic electron flow around PSI, and state transitions. The chain is Cytochrome b6-f complex subunit 7 from Synechococcus sp. (strain RCC307).